A 116-amino-acid chain; its full sequence is Large ribosomal subunit protein uL18 (116 aa).

Belongs to the universal ribosomal protein uL18 family. Part of the 50S ribosomal subunit; part of the 5S rRNA/L5/L18/L25 subcomplex. Contacts the 5S and 23S rRNAs.

This is one of the proteins that bind and probably mediate the attachment of the 5S RNA into the large ribosomal subunit, where it forms part of the central protuberance. The protein is Large ribosomal subunit protein uL18 of Acinetobacter baumannii (strain AB307-0294).